The following is a 252-amino-acid chain: Phosphate import ATP-binding protein PstB (252 aa).

The ABC transporter domain maps to 5 to 247; that stretch reads MRGQDVKVFY…PKEQRTQDYI (243 aa). 37-44 provides a ligand contact to ATP; sequence GPSGCGKS.

Belongs to the ABC transporter superfamily. Phosphate importer (TC 3.A.1.7) family. In terms of assembly, the complex is composed of two ATP-binding proteins (PstB), two transmembrane proteins (PstC and PstA) and a solute-binding protein (PstS).

It is found in the cell inner membrane. It carries out the reaction phosphate(out) + ATP + H2O = ADP + 2 phosphate(in) + H(+). Part of the ABC transporter complex PstSACB involved in phosphate import. Responsible for energy coupling to the transport system. In Bartonella henselae (strain ATCC 49882 / DSM 28221 / CCUG 30454 / Houston 1) (Rochalimaea henselae), this protein is Phosphate import ATP-binding protein PstB.